Reading from the N-terminus, the 962-residue chain is MSVRKRYKVTYVLDSCNDQLGHRLDANCLVLGRYFSEQGSAPVTRALYSGGRDGQLFGWDIGYDYGKASQPLAKIQAHSAWVNDIALTHDSEGVISCSSDSTVKLWKPHVLNASCLSTIGEHTDYVKRVSIPKYSKSPLVASGGLDKRIIVWDYNVGQEVMRFEQLPDCSLVVGPRSGVYSLAANNNIIANGGLQKDIQLWDCVSKKRITDLVGHTDNVRDILISDDGRTILTASSDATIKLWSLRAQKCLFSFIAHSDSVWALYSEHPDLKVFYAGDRSGLITRTDIRNQPNNQSCTAICKQDAPVSDIVARQSFIWSTSRDGSILRWKDEPLFNQDVGAALSKHTSSHLSVSSDCPSRHSSDIRNHSCPTLYHDDAEDIYYDLHHTESYSNINLTKTPDYVIHGGIGLLKYRMLGDRRHVLTEDAVGNKCLWDILACKQAGEFDKSEDFEKIVQSLDTVQAIPRWASVNCLLGILAVTLDENHYMDAEIYADECPLLKVDSPSDKRINLGVWILKNLFREFIDAELHRDLKFRQNLDVVRSEAKKQIEAQREEARKGNVNMPSALSPLRIRSRPSPLSLPPEPLLSPTIDYSATPFPLEPPPESPGPSLQIPSNNPVYTNLTDTDSMMGAPDYFSIPARQNRNRKPHTEVVGSPTVVRTKEIIPPKVTREGSFMGRLKKLGRSKSSKSLQTDFMKASVERAASSRVFSTGTSVTSPQALSKTNNTVNNAANTENNTLAKDKQQTSEASSPGTPRELKTTGELIEDLHEQYVHFKDKDTVLSLMKPPNDDTFPMLNLSSQITVIISEESPEAGNSRDIYRSTLENMADDIDLLENIMPFWLGRLLLLNEFPSKTAPTVNFTLQPFPGSGLPLIVNENTRLSASAMLRAQKIMDYSYSKLSQQRKDVSSLQFRCKDVVVTPKMTLATVKARIWRSGDDVVFHYDVAPRSVSEIVDKTQSLNI.

WD repeat units lie at residues 25-69 (DANC…GKAS), 77-116 (AHSA…ASCL), 121-162 (EHTD…EVMR), 172-211 (VVGP…RITD), 214-253 (GHTD…CLFS), and 302-339 (KQDA…NQDV). The segment covering 568-578 (SPLRIRSRPSP) has biased composition (low complexity). Disordered regions lie at residues 568-615 (SPLR…QIPS) and 702-758 (RAAS…PREL). A compositionally biased stretch (polar residues) spans 707 to 723 (RVFSTGTSVTSPQALSK). The residue at position 717 (serine 717) is a Phosphoserine. The span at 724 to 738 (TNNTVNNAANTENNT) shows a compositional bias: low complexity.

Interacts with ubp9 and bun62.

It localises to the cytoplasm. Its subcellular location is the cell tip. Functionally, required for the ubp9 recruitment to septa and cell tips but also for its enzymatic activity at these specific locations. The protein is UBP9-binding protein bun107 (bun107) of Schizosaccharomyces pombe (strain 972 / ATCC 24843) (Fission yeast).